The following is a 232-amino-acid chain: Orotidine 5'-phosphate decarboxylase (232 aa).

Substrate contacts are provided by residues Asp13, Lys35, 62 to 71 (DLKFHDIPNT), Thr121, Arg182, Gln191, Gly211, and Arg212. Residue Lys64 is the Proton donor of the active site.

Belongs to the OMP decarboxylase family. Type 1 subfamily. As to quaternary structure, homodimer.

It carries out the reaction orotidine 5'-phosphate + H(+) = UMP + CO2. The protein operates within pyrimidine metabolism; UMP biosynthesis via de novo pathway; UMP from orotate: step 2/2. In terms of biological role, catalyzes the decarboxylation of orotidine 5'-monophosphate (OMP) to uridine 5'-monophosphate (UMP). The chain is Orotidine 5'-phosphate decarboxylase from Teredinibacter turnerae (strain ATCC 39867 / T7901).